The following is a 267-amino-acid chain: 4-hydroxy-2-oxo-heptane-1,7-dioate aldolase (267 aa).

The active-site Proton acceptor is the His-45. Substrate is bound at residue Gln-147. Glu-149 is a binding site for a divalent metal cation. Substrate is bound by residues Ala-174 and Asp-175. Asp-175 is an a divalent metal cation binding site.

The protein belongs to the HpcH/HpaI aldolase family. Homohexamer; trimer of dimers. Requires a divalent metal cation as cofactor.

The enzyme catalyses 4-hydroxy-2-oxoheptanedioate = succinate semialdehyde + pyruvate. Its pathway is aromatic compound metabolism; 4-hydroxyphenylacetate degradation; pyruvate and succinate semialdehyde from 4-hydroxyphenylacetate: step 7/7. Catalyzes the reversible retro-aldol cleavage of 4-hydroxy-2-ketoheptane-1,7-dioate (HKHD) to pyruvate and succinic semialdehyde. In Shigella flexneri, this protein is 4-hydroxy-2-oxo-heptane-1,7-dioate aldolase.